The chain runs to 225 residues: MNLIEFPLLDQTSSNSVISTTPNDLSNWSRLSSLWPLLYGTSCCFIEFASLIGSRFDFDRYGLVPRSSPRQADLILTAGTVTMKMAPSLVRLYEQMPEPKYVIAMGACTITGGMFSTDSYSTVRGVDKLIPVDVYLPGCPPKPEAVIDALTKLRKKISREIVEDRTRSQNKNRCFTTSHKLYVRRSTHTGTYEQELLYQSPSTLDISSETFFKSKSPVPSYKLVN.

[4Fe-4S] cluster is bound by residues cysteine 43, cysteine 44, cysteine 108, and cysteine 139.

This sequence belongs to the complex I 20 kDa subunit family. In terms of assembly, NDH is composed of at least 16 different subunits, 5 of which are encoded in the nucleus. The cofactor is [4Fe-4S] cluster.

It is found in the plastid. It localises to the chloroplast thylakoid membrane. The enzyme catalyses a plastoquinone + NADH + (n+1) H(+)(in) = a plastoquinol + NAD(+) + n H(+)(out). The catalysed reaction is a plastoquinone + NADPH + (n+1) H(+)(in) = a plastoquinol + NADP(+) + n H(+)(out). NDH shuttles electrons from NAD(P)H:plastoquinone, via FMN and iron-sulfur (Fe-S) centers, to quinones in the photosynthetic chain and possibly in a chloroplast respiratory chain. The immediate electron acceptor for the enzyme in this species is believed to be plastoquinone. Couples the redox reaction to proton translocation, and thus conserves the redox energy in a proton gradient. The sequence is that of NAD(P)H-quinone oxidoreductase subunit K, chloroplastic from Agrostis stolonifera (Creeping bentgrass).